We begin with the raw amino-acid sequence, 474 residues long: MTTPTPFPVGPAHIVGIGGIGMSGIADVMLTMGYEVQGSDVSDSANVERLRARGVKVFIGHKPENVVGAGTVIISTAIRRDNPEVQAARAAGIPVVRRANMLAEITRLKYTVCVAGTHGKTTTTSLVACLLDGAGIDPTVINGGIIHAYGSNYKAGESDWMVVESDESDGTFAKLHPTCAIVTNIDPEHMDHYGTMDKLREAFDTFVENLPFYGFAVLCTDHPEVQALAARVTDRRRITYGFNLQADVRAVNLSTDLKGAHFDVEIRRGAGEAPRRIEGLTLPMAGEHNVQNALAAITVALELGASDEQISASLASFGGVKRRFTPVGEWLPAAGGEPVKIIDDYGHHPVEIAAVLKAARAMQADRTVIAVCQPHRYSRLKDLFEDFSRCFDQADHVLVAPVYEAGETPIPGITHETLVRSIQRNGHRSARALPSLAELPEVVKTLAGPGAMVVCLGAGDITRYAGELEARLKG.

An ATP-binding site is contributed by 116–122 (GTHGKTT).

Belongs to the MurCDEF family.

The protein localises to the cytoplasm. The enzyme catalyses UDP-N-acetyl-alpha-D-muramate + L-alanine + ATP = UDP-N-acetyl-alpha-D-muramoyl-L-alanine + ADP + phosphate + H(+). It participates in cell wall biogenesis; peptidoglycan biosynthesis. Functionally, cell wall formation. This Hyphomonas neptunium (strain ATCC 15444) protein is UDP-N-acetylmuramate--L-alanine ligase.